A 380-amino-acid polypeptide reads, in one-letter code: Homoserine O-acetyltransferase (380 aa).

The 297-residue stretch at 70–366 (NAVLVFHALT…SPHGHDAFLI (297 aa)) folds into the AB hydrolase-1 domain. The active-site Nucleophile is Ser-186. Arg-250 provides a ligand contact to substrate. Residues Asp-333 and His-361 contribute to the active site. A substrate-binding site is contributed by Asp-362.

It belongs to the AB hydrolase superfamily. MetX family. In terms of assembly, homodimer.

It localises to the cytoplasm. The catalysed reaction is L-homoserine + acetyl-CoA = O-acetyl-L-homoserine + CoA. The protein operates within amino-acid biosynthesis; L-methionine biosynthesis via de novo pathway; O-acetyl-L-homoserine from L-homoserine: step 1/1. In terms of biological role, transfers an acetyl group from acetyl-CoA to L-homoserine, forming acetyl-L-homoserine. In Thermus thermophilus (strain ATCC BAA-163 / DSM 7039 / HB27), this protein is Homoserine O-acetyltransferase.